Here is a 145-residue protein sequence, read N- to C-terminus: Ponticulin-like protein B (145 aa).

A signal peptide spans 1 to 22 (MLFIKSLLLLLSLIFAVSNATG). The N-linked (GlcNAc...) asparagine glycan is linked to asparagine 34. The disordered stretch occupies residues 107–126 (DTTSSSTSPSSTSPSSTSPA). A compositionally biased stretch (low complexity) spans 108–126 (TTSSSTSPSSTSPSSTSPA). Residue serine 117 is the site of GPI-like-anchor amidated serine attachment. Positions 118–145 (TSPSSTSPASTLIGSIAFVTLAALFALI) are cleaved as a propeptide — removed in mature form.

This sequence belongs to the ponticulin family. The GPI-like-anchor contains a phosphoceramide group, rather than a phosphatidyl group.

It is found in the cell membrane. Its function is as follows. Binds F-actin and nucleates actin assembly. In Dictyostelium discoideum (Social amoeba), this protein is Ponticulin-like protein B (ponB).